A 566-amino-acid chain; its full sequence is Macrophage colony-stimulating factor 1 (566 aa).

An N-terminal signal peptide occupies residues 1 to 32 (MTARGAAGRCPSSTWMGSRLLLVCLLVSRSVA). The Extracellular portion of the chain corresponds to 33–508 (EVSEHCSHMI…SSIQDPQTSA (476 aa)). Asn106, Asn153, and Asn171 each carry an N-linked (GlcNAc...) asparagine glycan. Disordered stretches follow at residues 197–417 (PSSD…KLLP) and 434–484 (GKKS…GAAR). Polar residues predominate over residues 253 to 265 (PRSTCQTLESTEQ). A glycan (O-linked (Xyl...) (chondroitin sulfate) serine) is linked at Ser302. Over residues 348 to 360 (DQQPTNITDTPLT) the composition is skewed to polar residues. N-linked (GlcNAc...) asparagine glycosylation is present at Asn353. Residues Thr355 and Thr357 are each glycosylated (O-linked (GalNAc...) threonine). Residues 377–394 (EKTDGSSTLREDQQEPRS) show a composition bias toward basic and acidic residues. Polar residues predominate over residues 400–410 (LNPQRVGNSAT). The segment covering 434-445 (GKKSTRDRRSPA) has biased composition (basic and acidic residues). A helical membrane pass occupies residues 509 to 531 (FVFWVLGIILVLLAVGGLLFYSW). At 532–566 (KRRSHRDPRTLDSSVGRPEGSSLAQDEDRQVELPV) the chain is on the cytoplasmic side. The tract at residues 538–566 (DPRTLDSSVGRPEGSSLAQDEDRQVELPV) is disordered. Residues 557–566 (DEDRQVELPV) show a composition bias toward basic and acidic residues.

In terms of assembly, homodimer or heterodimer; disulfide-linked. Likely to exist in multiple forms: homodimer consisting of 2 identical 150-200 kDa proteoglycan subunits, heterodimer consisting of a 150-200 kDa proteoglycan subunit and a truncated 43 kDa subunit, and a homodimer consisting of 2 identical 43 kDa subunits. Interacts with CSF1R. Post-translationally, N-glycosylated. In terms of processing, O-glycosylated; contains chondroitin sulfate.

Its subcellular location is the cell membrane. The protein resides in the secreted. The protein localises to the extracellular space. In terms of biological role, cytokine that plays an essential role in the regulation of survival, proliferation and differentiation of hematopoietic precursor cells, especially mononuclear phagocytes, such as macrophages and monocytes. Promotes the release of pro-inflammatory chemokines, and thereby plays an important role in innate immunity and in inflammatory processes. Plays an important role in the regulation of osteoclast proliferation and differentiation, the regulation of bone resorption, and is required for normal bone development. Required for normal male and female fertility. Promotes reorganization of the actin cytoskeleton, regulates formation of membrane ruffles, cell adhesion and cell migration. Plays a role in lipoprotein clearance. This chain is Macrophage colony-stimulating factor 1 (Csf1), found in Rattus norvegicus (Rat).